A 235-amino-acid chain; its full sequence is C-&gt;U-editing enzyme APOBEC-1 (235 aa).

Residues 10–131 (GDATLRRRIK…MDQQHRQGLK (122 aa)) form the CMP/dCMP-type deaminase domain. Histidine 60 is a binding site for Zn(2+). Glutamate 62 serves as the catalytic Proton donor. Zn(2+) is bound by residues cysteine 92 and cysteine 95.

The protein belongs to the cytidine and deoxycytidylate deaminase family. In terms of assembly, homodimer. Interacts with A1CF; form an mRNA editing complex. Interacts with RBM47; form an mRNA editing complex. Found in a complex with CELF2/CUGBP2 and A1CF. Interacts with HNRPAB. Interacts with SYNCRIP. Requires Zn(2+) as cofactor.

The protein resides in the cytoplasm. The protein localises to the nucleus. It carries out the reaction a cytidine in mRNA + H2O + H(+) = a uridine in mRNA + NH4(+). It catalyses the reaction cytidine(6666) in apoB mRNA + H2O + H(+) = uridine(6666) in apoB mRNA + NH4(+). Functionally, cytidine deaminase catalyzing the cytidine to uridine postranscriptional editing of a variety of mRNAs. Form complexes with cofactors that confer differential editing activity and selectivity. Responsible for the postranscriptional editing of a CAA codon for Gln to a UAA codon for stop in the apolipoprotein B mRNA. Also involved in CGA (Arg) to UGA (Stop) editing in the NF1 mRNA. May also play a role in the epigenetic regulation of gene expression by participating in DNA demethylation. This is C-&gt;U-editing enzyme APOBEC-1 from Monodelphis domestica (Gray short-tailed opossum).